A 487-amino-acid chain; its full sequence is uncharacterized protein (487 aa).

A run of 3 helical transmembrane segments spans residues 10–30, 45–65, and 439–459; these read AALM…AADA, VISP…AVAA, and APVV…DFTL.

The protein resides in the cell membrane. This is an uncharacterized protein from Mycobacterium tuberculosis (strain CDC 1551 / Oshkosh).